The sequence spans 296 residues: Release factor glutamine methyltransferase (296 aa).

Residues 133-137 (GTGSG), Asp-156, and Asn-201 contribute to the S-adenosyl-L-methionine site. 201–204 (NPPY) is a substrate binding site.

The protein belongs to the protein N5-glutamine methyltransferase family. PrmC subfamily.

It carries out the reaction L-glutaminyl-[peptide chain release factor] + S-adenosyl-L-methionine = N(5)-methyl-L-glutaminyl-[peptide chain release factor] + S-adenosyl-L-homocysteine + H(+). Functionally, methylates the class 1 translation termination release factors RF1/PrfA and RF2/PrfB on the glutamine residue of the universally conserved GGQ motif. In Rhodopirellula baltica (strain DSM 10527 / NCIMB 13988 / SH1), this protein is Release factor glutamine methyltransferase.